The following is a 580-amino-acid chain: Efflux pump dotC (580 aa).

The segment covering M1 to E34 has biased composition (basic and acidic residues). A disordered region spans residues M1 to L45. An N-linked (GlcNAc...) asparagine glycan is attached at N10. The segment covering E35–A44 has biased composition (acidic residues). A helical transmembrane segment spans residues P49–L69. Residue N86 is glycosylated (N-linked (GlcNAc...) asparagine). 13 consecutive transmembrane segments (helical) span residues A89–W109, A127–T147, G153–L173, G181–F201, W209–L229, F242–F262, S275–V295, A318–L338, P348–A368, L380–F400, L409–V429, T444–Y466, and S519–V539. Residues K559 to S580 are disordered.

Belongs to the major facilitator superfamily. TCR/Tet family.

The protein localises to the cell membrane. It is found in the vacuole membrane. Functionally, efflux pump; part of the gene cluster that mediates the biosynthesis of dothistromin (DOTH), a polyketide toxin very similar in structure to the aflatoxin precursor, versicolorin B. One function of dotC may be to transport early-stage dothistromin biosynthetic intermediates from the cytoplasm into vacuoles, thereby affecting the rate of dothistromin production. The protein is Efflux pump dotC of Dothistroma septosporum (strain NZE10 / CBS 128990) (Red band needle blight fungus).